Here is a 190-residue protein sequence, read N- to C-terminus: dTTP/UTP pyrophosphatase (190 aa).

The active-site Proton acceptor is aspartate 69.

It belongs to the Maf family. YhdE subfamily. The cofactor is a divalent metal cation.

The protein resides in the cytoplasm. The enzyme catalyses dTTP + H2O = dTMP + diphosphate + H(+). It catalyses the reaction UTP + H2O = UMP + diphosphate + H(+). Nucleoside triphosphate pyrophosphatase that hydrolyzes dTTP and UTP. May have a dual role in cell division arrest and in preventing the incorporation of modified nucleotides into cellular nucleic acids. The sequence is that of dTTP/UTP pyrophosphatase from Sphingopyxis alaskensis (strain DSM 13593 / LMG 18877 / RB2256) (Sphingomonas alaskensis).